The primary structure comprises 210 residues: Superoxide dismutase [Mn], mitochondrial (210 aa).

Positions 30, 78, 166, and 170 each coordinate Mn(2+).

This sequence belongs to the iron/manganese superoxide dismutase family. In terms of assembly, homotetramer. Requires Mn(2+) as cofactor. The N-terminus is blocked.

The protein resides in the mitochondrion matrix. The enzyme catalyses 2 superoxide + 2 H(+) = H2O2 + O2. Its function is as follows. Destroys superoxide anion radicals which are normally produced within the cells and which are toxic to biological systems. This Penicillium chrysogenum (Penicillium notatum) protein is Superoxide dismutase [Mn], mitochondrial (SOD).